A 1239-amino-acid polypeptide reads, in one-letter code: Structural polyprotein (1239 aa).

The interval 15 to 95 (RPAPVQRYIP…KKKSKPGKRM (81 aa)) is disordered. The host transcription inhibition stretch occupies residues 36-62 (RGPSQLQQLVAALGALALQPKQKQKRA). Residues 38 to 56 (PSQLQQLVAALGALALQPK) are compositionally biased toward low complexity. Residues 55–91 (PKQKQKRAQKKPKKTPPPKPKKTQKPKKPTQKKKSKP) carry the Nuclear localization signal motif. Residues 57–95 (QKQKRAQKKPKKTPPPKPKKTQKPKKPTQKKKSKPGKRM) show a composition bias toward basic residues. The binding to the viral RNA stretch occupies residues 78–106 (QKPKKPTQKKKSKPGKRMRNCMKIENDCI). The tract at residues 91–105 (PGKRMRNCMKIENDC) is ribosome-binding. The cysteines at positions 105 and 120 are disulfide-linked. The Peptidase S3 domain maps to 105-253 (CIFPVMLDGK…RITPEESVEW (149 aa)). Histidine 131 acts as the Charge relay system in catalysis. Positions 136-146 (IDNPELAKLTF) match the Nuclear export signal motif. The segment at 147-152 (KKSSKY) is interaction with spike glycoprotein E2. Aspartate 153 acts as the Charge relay system in catalysis. The tract at residues 175–185 (PEGHYNWHHGA) is dimerization of the capsid protein. The active-site Charge relay system is the serine 205. The interval 211–215 (DNTGK) is dimerization of the capsid protein. The segment at 254 to 269 (SAAALNITALCVLQNL) is functions as an uncleaved signal peptide for the precursor of protein E3/E2. Disulfide bonds link cysteine 264-cysteine 273, cysteine 278-cysteine 282, cysteine 281-cysteine 313, cysteine 339-cysteine 443, cysteine 342-cysteine 348, cysteine 411-cysteine 425, cysteine 471-cysteine 585, cysteine 519-cysteine 545, and cysteine 521-cysteine 539. N-linked (GlcNAc...) asparagine; by host glycosylation occurs at asparagine 268. Residues 322–686 (SVAHFEAYKA…HYYDLYPYWT (365 aa)) are Extracellular-facing. Residues 687 to 707 (ITVLASLGLLIVISSGFSCFL) form a helical membrane-spanning segment. Residues cysteine 705 and cysteine 708 are each lipidated (S-palmitoyl cysteine; by host). Over 708 to 751 (CSVARTKCLTPYQLAPGAQLPTFIALLCCAKSARADTLDDFSYL) the chain is Cytoplasmic. Positions 710–714 (VARTK) are interaction with the capsid protein. 3 S-palmitoyl cysteine; by host lipidation sites follow: cysteine 715, cysteine 735, and cysteine 736. A disulfide bond links cysteine 715 and cysteine 736. Residues 752-756 (WTNNQ) lie on the Extracellular side of the membrane. The chain crosses the membrane as a helical span at residues 757–777 (AMFWLQLASPVAAFLCLSYCC). Topologically, residues 778–779 (RN) are cytoplasmic. The chain crosses the membrane as a helical span at residues 780–800 (LACCMKIFLGISGLCVIATQA). Residues 801 to 1216 (YEHSTTMPNQ…WQWLAHTTSG (416 aa)) are Extracellular-facing. Cystine bridges form between cysteine 849/cysteine 914, cysteine 862/cysteine 894, cysteine 863/cysteine 896, and cysteine 868/cysteine 878. The E1 fusion peptide loop stretch occupies residues 884–901 (VYPFMWGGAYCFCDTENS). N-linked (GlcNAc...) asparagine; by host glycans are attached at residues asparagine 941, asparagine 1009, and asparagine 1070. 4 disulfide bridges follow: cysteine 1059/cysteine 1071, cysteine 1101/cysteine 1176, cysteine 1106/cysteine 1180, and cysteine 1128/cysteine 1170. A helical transmembrane segment spans residues 1217–1237 (PLTILVVAIIVVVVVSIVVCA). A lipid anchor (S-palmitoyl cysteine; by host) is attached at cysteine 1236. At 1238–1239 (RH) the chain is on the cytoplasmic side.

Homodimer. Homomultimer. Interacts with host karyopherin KPNA4; this interaction allows the nuclear import of the viral capsid protein. Interacts with spike glycoprotein E2. Interacts with host IRAK1; the interaction leads to inhibition of IRAK1-dependent signaling. As to quaternary structure, the precursor of protein E3/E2 and E1 form a heterodimer shortly after synthesis. In terms of assembly, interacts with spike glycoprotein E1. The precursor of protein E3/E2 and E1 form a heterodimer shortly after synthesis. Processing of the precursor of protein E3/E2 into E2 and E3 results in a heterodimer of the spike glycoproteins E2 and E1. Spike at virion surface are constituted of a trimer of E2-E1 heterodimers. After target cell attachment and endocytosis, E1 change conformation to form homotrimers. Interacts with 6K protein. Interacts with spike glycoprotein E1. Processing of the precursor of protein E3/E2 into E2 and E3 results in a heterodimer of the spike glycoproteins E2 and E1. Spike at virion surface are constituted of a trimer of E2-E1 heterodimers. Interacts with 6K protein. Interacts with host MXRA8; this interaction mediates virus entry. Interacts with the capsid protein. As to quaternary structure, oligomer. Interacts with spike glycoprotein E1. Interacts with spike glycoprotein E2. Structural polyprotein: Specific enzymatic cleavages in vivo yield mature proteins. Capsid protein is auto-cleaved during polyprotein translation, unmasking a signal peptide at the N-terminus of the precursor of E3/E2. The remaining polyprotein is then targeted to the host endoplasmic reticulum, where host signal peptidase cleaves it into pE2, 6K and E1 proteins. pE2 is further processed to mature E3 and E2 by host furin in trans-Golgi vesicle. Post-translationally, palmitoylated via thioester bonds. These palmitoylations may induce disruption of the C-terminus transmembrane. This would result in the reorientation of E2 C-terminus from lumenal to cytoplasmic side. In terms of processing, N-glycosylated. Palmitoylated via thioester bonds.

The protein resides in the virion. Its subcellular location is the host cytoplasm. The protein localises to the host cell membrane. It localises to the host nucleus. It is found in the virion membrane. The protein resides in the host Golgi apparatus. Its subcellular location is the host trans-Golgi network. The protein localises to the host endoplasmic reticulum. It catalyses the reaction Autocatalytic release of the core protein from the N-terminus of the togavirus structural polyprotein by hydrolysis of a -Trp-|-Ser- bond.. Forms an icosahedral capsid with a T=4 symmetry composed of 240 copies of the capsid protein surrounded by a lipid membrane through which penetrate 80 spikes composed of trimers of E1-E2 heterodimers. The capsid protein binds to the viral RNA genome at a site adjacent to a ribosome binding site for viral genome translation following genome release. Possesses a protease activity that results in its autocatalytic cleavage from the nascent structural protein. Following its self-cleavage, the capsid protein transiently associates with ribosomes, and within several minutes the protein binds to viral RNA and rapidly assembles into icosahedric core particles. The resulting nucleocapsid eventually associates with the cytoplasmic domain of the spike glycoprotein E2 at the cell membrane, leading to budding and formation of mature virions. In case of infection, new virions attach to target cells and after clathrin-mediated endocytosis their membrane fuses with the host endosomal membrane. This leads to the release of the nucleocapsid into the cytoplasm, followed by an uncoating event necessary for the genomic RNA to become accessible. The uncoating might be triggered by the interaction of capsid proteins with ribosomes. Binding of ribosomes would release the genomic RNA since the same region is genomic RNA-binding and ribosome-binding. Specifically inhibits interleukin-1 receptor-associated kinase 1/IRAK1-dependent signaling during viral entry, representing a means by which the alphaviruses may evade innate immune detection and activation prior to viral gene expression. In terms of biological role, provides the signal sequence for the translocation of the precursor of protein E3/E2 to the host endoplasmic reticulum. Furin-cleaved E3 remains associated with spike glycoprotein E1 and mediates pH protection of the latter during the transport via the secretory pathway. After virion release from the host cell, the assembly protein E3 is gradually released in the extracellular space. Functionally, plays a role in viral attachment to target host cell, by binding to the cell receptor MXRA8. Synthesized as a p62 precursor which is processed by furin at the cell membrane just before virion budding, giving rise to E2-E1 heterodimer. The p62-E1 heterodimer is stable, whereas E2-E1 is unstable and dissociate at low pH. p62 is processed at the last step, presumably to avoid E1 fusion activation before its final export to cell surface. E2 C-terminus contains a transitory transmembrane that would be disrupted by palmitoylation, resulting in reorientation of the C-terminal tail from lumenal to cytoplasmic side. This step is critical since E2 C-terminus is involved in budding by interacting with capsid proteins. This release of E2 C-terminus in cytoplasm occurs lately in protein export, and precludes premature assembly of particles at the endoplasmic reticulum membrane. Its function is as follows. Acts as a viroporin that participates in virus glycoprotein processing and transport to the plasma membrane, cell permeabilization and budding of viral particles. The cation channel is permeable to Na(+)&gt;K(+)&gt;Ca(2+) in vitro. Disrupts the calcium homeostasis of the cell, probably at the endoplasmic reticulum level. This leads to cytoplasmic calcium elevation. Because of its lipophilic properties, the 6K protein is postulated to influence the selection of lipids that interact with the transmembrane domains of the glycoproteins, which, in turn, affects the deformability of the bilayer required for the extreme curvature that occurs as budding proceeds. Present in low amount in virions, about 3% compared to viral glycoproteins. Class II viral fusion protein. Fusion activity is inactive as long as E1 is bound to E2 in mature virion. After virus attachment to target cell via host MXRA8 and endocytosis, acidification of the endosome induce dissociation of E1/E2 heterodimer and concomitant trimerization of the E1 subunits. This E1 trimer is fusion active, and promotes release of viral nucleocapsid in cytoplasm after endosome and viral membrane fusion. Efficient fusion requires the presence of cholesterol and sphingolipid in the target membrane. The sequence is that of Structural polyprotein from Anopheles amictus (Common banded mosquito).